The primary structure comprises 172 residues: Mesogenin-1 (172 aa).

The interval 1 to 69 (METLHHPLVK…SPYSSSSHTQ (69 aa)) is disordered. A compositionally biased stretch (polar residues) spans 18-29 (SSDSEPNSSCMA). Residues 42–66 (SLSQTPSPQSLSPAVSYESPYSSSS) are compositionally biased toward low complexity. One can recognise a bHLH domain in the interval 108-162 (QRRRKASEREKLRMRAIAEALHTLRNNLPPMYSQGRQPLTKIQTLKCTINYISEL).

Its subcellular location is the nucleus. Functionally, involved in specifying the paraxial, but not dorsal, mesoderm. May regulate the expression of T-box transcription factors required for mesoderm formation and differentiation, such as brachyury T, wnt8, vegt and eomes. The sequence is that of Mesogenin-1 (msgn1) from Xenopus tropicalis (Western clawed frog).